A 574-amino-acid chain; its full sequence is Galactose transporter (574 aa).

The interval 1–57 (MAVEENNMPVVSQQPQAGEDVISSLSKDSHLSAQSQKYSNDELKAGESGSEGSQSVP) is disordered. Residues 1-70 (MAVEENNMPV…PKKPMSEYVT (70 aa)) lie on the Cytoplasmic side of the membrane. Residues 23-38 (SSLSKDSHLSAQSQKY) are compositionally biased toward polar residues. A phosphoserine mark is found at Ser-32, Ser-35, Ser-39, Ser-48, Ser-50, Ser-53, and Ser-55. A helical transmembrane segment spans residues 71-91 (VSLLCLCVAFGGFMFGWDTGT). Topologically, residues 92–121 (ISGFVVQTDFLRRFGMKHKDGTHYLSNVRT) are extracellular. Residues 122–142 (GLIVAIFNIGCAFGGIILSKG) traverse the membrane as a helical segment. The Cytoplasmic portion of the chain corresponds to 143–149 (GDMYGRK). Residues 150–170 (KGLSIVVSVYIVGIIIQIASI) traverse the membrane as a helical segment. Residues 171–175 (NKWYQ) lie on the Extracellular side of the membrane. Residues 176–196 (YFIGRIISGLGVGGIAVLCPM) traverse the membrane as a helical segment. The Cytoplasmic segment spans residues 197 to 207 (LISEIAPKHLR). Residues 208–228 (GTLVSCYQLMITAGIFLGYCT) traverse the membrane as a helical segment. The Extracellular portion of the chain corresponds to 229–242 (NYGTKSYSNSVQWR). Residues 243–263 (VPLGLCFAWSLFMIGALTLVP) traverse the membrane as a helical segment. Over 264-342 (ESPRYLCEVN…MGVFVQMFQQ (79 aa)) the chain is Cytoplasmic. Residues 343–362 (LTGNNYFFYYGTVIFKSVGL) form a helical membrane-spanning segment. At 363–366 (DDSF) the chain is on the extracellular side. Residues 367–387 (ETSIVIGVVNFASTFFSLWTV) form a helical membrane-spanning segment. Residues 388 to 394 (ENLGHRK) are Cytoplasmic-facing. A helical membrane pass occupies residues 395–415 (CLLLGAATMMACMVIYASVGV). Topologically, residues 416-435 (TRLYPHGKSQPSSKGAGNCM) are extracellular. Residues 436 to 456 (IVFTCFYIFCYATTWAPVAWV) traverse the membrane as a helical segment. At 457-472 (ITAESFPLRVKSKCMA) the chain is on the cytoplasmic side. A helical transmembrane segment spans residues 473 to 493 (LASASNWVWGFLIAFFTPFIT). Over 494–499 (SAINFY) the chain is Extracellular. Residues 500–520 (YGYVFMGCLVAMFFYVFFFVP) traverse the membrane as a helical segment. Residues 521-574 (ETKGLSLEEIQELWEEGVLPWKSEGWIPSSRRGNNYDLEDLQHDDKPWYKAMLE) lie on the Cytoplasmic side of the membrane.

This sequence belongs to the major facilitator superfamily. Sugar transporter (TC 2.A.1.1) family.

The protein localises to the membrane. Its function is as follows. GAL2 is a facilitated diffusion transporter required for both the high-affinity galactokinase-dependent and low-affinity galactokinase-independent galactose transport processes. The chain is Galactose transporter (GAL2) from Saccharomyces cerevisiae (strain ATCC 204508 / S288c) (Baker's yeast).